Consider the following 556-residue polypeptide: Neurofilament light polypeptide (556 aa).

Ser2 bears the N-acetylserine mark. The head stretch occupies residues 2–94 (SSYGYDPFFP…KSIRSQERAQ (93 aa)). The IF rod domain occupies 91 to 402 (ERAQLQDLND…KLLEGEETRL (312 aa)). The tract at residues 95–126 (LQDLNDRFACFIERVHELEQQNKVLEAELLVL) is coil 1A. Residues 127–139 (RQKHAEPSRFRAL) form a linker 1 region. The tract at residues 140-235 (YEQEIRELRL…KVHEEELAEL (96 aa)) is coil 1B. Positions 236-254 (QAQIQYAHLSVEMDVSAKP) are linker 12. A coil 2A region spans residues 255–273 (DLSAALRDIRAQYEKLAAR). Positions 274–282 (NMQNAEEWF) are linker 2. The coil 2B stretch occupies residues 283–398 (RSRFTVLSES…AAYRKLLEGE (116 aa)). A tail, subdomain A region spans residues 399 to 445 (ETRLSFTSVGSITSGYTQTAPTFGRSAYSGLQSTSYLMTTRSFPTYY). The interval 399–556 (ETRLSFTSVG…KEETEVKKKA (158 aa)) is tail. The interval 446 to 556 (SSHVQEEQIE…KEETEVKKKA (111 aa)) is tail, subdomain B (acidic). The span at 464-473 (KAGEAKAAPA) shows a compositional bias: low complexity. Residues 464-556 (KAGEAKAAPA…KEETEVKKKA (93 aa)) form a disordered region. The span at 474–540 (EEGEEEEKEE…AEETGEEEKE (67 aa)) shows a compositional bias: acidic residues. The span at 541–556 (EKEAAGKEETEVKKKA) shows a compositional bias: basic and acidic residues.

Belongs to the intermediate filament family. In terms of assembly, forms homodimers (in vitro).

Its subcellular location is the cell projection. It localises to the axon. The protein localises to the cytoplasm. The protein resides in the cytoskeleton. In terms of biological role, neurofilaments usually contain three intermediate filament proteins: NEFL, NEFM, and NEFH which are involved in the maintenance of neuronal caliber. May additionally cooperate with the neuronal intermediate filament proteins to form neuronal filamentous networks. The polypeptide is Neurofilament light polypeptide (NEFL) (Coturnix japonica (Japanese quail)).